Reading from the N-terminus, the 210-residue chain is Calaxin (210 aa).

EF-hand domains follow at residues 64 to 99 (TDDM…FLRG), 100 to 135 (TLDE…SLIR), and 145 to 180 (GIKD…ENLL). Positions 77, 79, 81, 83, 88, 113, 115, 117, 119, 124, 158, 160, 162, 164, and 169 each coordinate Ca(2+).

In terms of assembly, component of the outer dynein arm-docking complex along with ODAD1, ODAD2, ODAD3 and ODAD4.

It localises to the cytoplasm. The protein resides in the cytoskeleton. It is found in the cilium axoneme. The protein localises to the cell projection. Its subcellular location is the cilium. It localises to the flagellum. Its function is as follows. Component of the outer dynein arm-docking complex (ODA-DC) that mediates outer dynein arms (ODA) binding onto the doublet microtubule. Seems to regulate the assembly of both ODAs and their axonemal docking complex onto ciliary microtubules. Regulates ciliary and flagellar motility and is required for cilia-driven determination of body laterality. Regulates ciliary motility and is required for cilia-driven determination of body laterality. The chain is Calaxin (clxn) from Danio rerio (Zebrafish).